Here is a 550-residue protein sequence, read N- to C-terminus: MSDTTTAFTVPAVAKAVAAAIPDRELIIQGDRRYTYRQVIERSNRLAAYLHSQGLGCHTEREALAGHEVGQDLLGLYAYNGNEFVEALLGAFAARVAPFNVNFRYVKSELHYLLADSEATALIYHAAFAPRVAEILPELPRLRVLIQIADESGNELLDGAVDYEDALASVSAQPPPVRHCPDDLYVLYTGGTTGMPKGVLWRQHDIFMTSFGGRNLMTGEPSSSIDEIVQRAASGPGTKLMILPPLIHGAAQWSVMTAITTGQTVVFPTVVDHLDAEDVVRTIEREKVMVVTVVGDAMARPLVAAIEKGIADVSSLAVVANGGALLTPFVKQRLIEVLPNAVVVDGVGSSETGAQMHHMSTPGAVATGTFNAGPDTFVAAEDLSAILPPGHEGMGWLAQRGYVPLGYKGDAAKTAKTFPVIDGVRYAVPGDRARHHADGHIELLGRDSVCINSGGEKIFVEEVETAIASHPAVADVVVAGRPSERWGQEVVAVVALSDGAAVDAGELIAHASNSLARYKLPKAIVFRPVIERSPSGKADYRWAREQAVNG.

The N-terminal stretch at methionine 1–alanine 19 is a signal peptide.

The protein belongs to the ATP-dependent AMP-binding enzyme family.

The protein resides in the secreted. It is found in the cell wall. It carries out the reaction a medium-chain fatty acid + ATP + CoA = a medium-chain fatty acyl-CoA + AMP + diphosphate. The enzyme catalyses hexanoate + ATP + CoA = hexanoyl-CoA + AMP + diphosphate. It catalyses the reaction heptanoate + ATP + CoA = heptanoyl-CoA + AMP + diphosphate. The catalysed reaction is octanoate + ATP + CoA = octanoyl-CoA + AMP + diphosphate. It carries out the reaction decanoate + ATP + CoA = decanoyl-CoA + AMP + diphosphate. The enzyme catalyses dodecanoate + ATP + CoA = dodecanoyl-CoA + AMP + diphosphate. It catalyses the reaction tetradecanoate + ATP + CoA = tetradecanoyl-CoA + AMP + diphosphate. The catalysed reaction is (9Z)-octadecenoate + ATP + CoA = (9Z)-octadecenoyl-CoA + AMP + diphosphate. It carries out the reaction (9Z,12Z,15Z)-octadecatrienoate + ATP + CoA = (9Z,12Z,15Z)-octadecatrienoyl-CoA + AMP + diphosphate. The enzyme catalyses (5Z,8Z,11Z,14Z)-eicosatetraenoate + ATP + CoA = (5Z,8Z,11Z,14Z)-eicosatetraenoyl-CoA + AMP + diphosphate. It participates in lipid metabolism; fatty acid metabolism. Inhibited by 2-hydroxydodecanoic acid, a typical inhibitor of medium-chain acyl-CoA synthetases. Its function is as follows. Catalyzes the activation of medium-chain fatty acids as acyl-coenzyme A (acyl-CoA). Shows maximal activity with saturated fatty acids of medium-chain length between C6 and C12. Has lower activity with tridecanoic acid (C13), tetradecanoic acid (C14) and with unsaturated fatty acids like oleic acid (C18:1), linolenic acid (C18:3) and arachidonic acid (C20:4). Shows weak activity with some aromatic carbon acids. Involved in the metabolism of fatty acid during mycobacterial survival in macrophages. The chain is Medium-chain acyl-CoA ligase Mig from Mycobacterium avium.